The sequence spans 268 residues: F-actin-capping protein subunit alpha (268 aa).

Residue S2 is modified to N-acetylserine. Phosphoserine is present on S17.

This sequence belongs to the F-actin-capping protein alpha subunit family. Component of the F-actin capping complex, composed of a heterodimer of an alpha and a beta subunit. Interacts with BSP1 (via C-terminus); leading to recruitment of the F-actin capping complex to actin cortical patches and the acomyosin contractile ring.

The protein resides in the cytoplasm. The protein localises to the cytoskeleton. It localises to the actin patch. Its function is as follows. F-actin-capping proteins bind in a Ca(2+)-independent manner to the fast growing ends of actin filaments (barbed end) thereby blocking the exchange of subunits at these ends. Unlike other capping proteins (such as gelsolin and severin), these proteins do not sever actin filaments. The sequence is that of F-actin-capping protein subunit alpha (CAP1) from Saccharomyces cerevisiae (strain ATCC 204508 / S288c) (Baker's yeast).